The chain runs to 618 residues: Probable arginine--tRNA ligase, cytoplasmic (618 aa).

2 interaction with tRNA regions span residues 60-61 (ET) and 104-109 (NGIFLR). L-arginine contacts are provided by residues 146–151 (EFSSPN), H160, Y359, D363, and Q387. Positions 149 to 160 (SPNIAKPFHAGH) match the 'HIGH' region motif. Residues 496–510 (DTGPYLQYAHSRLSS) form an interaction with tRNA region.

It belongs to the class-I aminoacyl-tRNA synthetase family.

Its subcellular location is the cytoplasm. It catalyses the reaction tRNA(Arg) + L-arginine + ATP = L-arginyl-tRNA(Arg) + AMP + diphosphate. Functionally, forms part of a macromolecular complex that catalyzes the attachment of specific amino acids to cognate tRNAs during protein synthesis. The sequence is that of Probable arginine--tRNA ligase, cytoplasmic (mrs1) from Schizosaccharomyces pombe (strain 972 / ATCC 24843) (Fission yeast).